The sequence spans 167 residues: uncharacterized protein (167 aa).

The span at 1-13 (MQGDIRRKKDLLP) shows a compositional bias: basic and acidic residues. Disordered regions lie at residues 1–26 (MQGD…SRRR) and 67–167 (ESHS…ILDN). Residues 71 to 80 (SDVSASASDH) are compositionally biased toward low complexity. Residues 102 to 156 (VPKEKFNNEVAKQQEVKNLENDLKPQIDSEKQKQINKDKKEQKQQLQKEKQDLAK) show a composition bias toward basic and acidic residues.

This is an uncharacterized protein from Saccharomyces cerevisiae (strain ATCC 204508 / S288c) (Baker's yeast).